A 381-amino-acid chain; its full sequence is KRR1 small subunit processome component homolog (381 aa).

Positions 1 to 51 (MASPSLERPEKGAGKSEFRNQKPKPENQDESELLTVPDGWKEPAFSKEDNP) are disordered. At alanine 2 the chain carries N-acetylalanine. A phosphoserine mark is found at serine 3 and serine 5. Composition is skewed to basic and acidic residues over residues 7–27 (ERPE…KPEN) and 39–51 (GWKE…EDNP). Residue lysine 24 forms a Glycyl lysine isopeptide (Lys-Gly) (interchain with G-Cter in SUMO2) linkage. Residues 154-206 (KERFVKRRQRLIGPKGSTLKALELLTNCYIMVQGNTVSAIGPFSGLKEVRKVV) enclose the KH domain. Positions 250–262 (NVNKRKEPKKKTV) are enriched in basic residues. Disordered stretches follow at residues 250–278 (NVNK…ESQI) and 309–338 (AISK…ASTE). Residues lysine 340 and lysine 369 each participate in a glycyl lysine isopeptide (Lys-Gly) (interchain with G-Cter in SUMO2) cross-link.

It belongs to the KRR1 family. In terms of assembly, part of the small subunit (SSU) processome, composed of more than 70 proteins and the RNA chaperone small nucleolar RNA (snoRNA) U3. As to quaternary structure, (Microbial infection) Directly interacts with HIV-1 protein VPR. Also identified in a complex with NR3C1 and HIV-1 protein VPR.

It is found in the nucleus. It localises to the nucleolus. The protein localises to the cytoplasm. Its function is as follows. Part of the small subunit (SSU) processome, first precursor of the small eukaryotic ribosomal subunit. During the assembly of the SSU processome in the nucleolus, many ribosome biogenesis factors, an RNA chaperone and ribosomal proteins associate with the nascent pre-rRNA and work in concert to generate RNA folding, modifications, rearrangements and cleavage as well as targeted degradation of pre-ribosomal RNA by the RNA exosome. This is KRR1 small subunit processome component homolog from Homo sapiens (Human).